The primary structure comprises 1100 residues: Tyrosine-protein kinase JAK3 (1100 aa).

The interval 1 to 223 (MAPPSEETPL…RRTVVQALRR (223 aa)) is cytokine/interferon/growth hormone receptors. Residue serine 17 is modified to Phosphoserine. Residues 24–353 (GALHVLLPPR…GYFRLICDSR (330 aa)) form the FERM domain. The 101-residue stretch at 372 to 472 (LCHGPITLDF…GTALNLTSCC (101 aa)) folds into the SH2; atypical domain. The 261-residue stretch at 517–777 (LEWHENLGHG…AILRDLNGLI (261 aa)) folds into the Protein kinase 1 domain. At tyrosine 781 the chain carries Phosphotyrosine; by autocatalysis. In terms of domain architecture, Protein kinase 2 spans 818–1091 (LKYISLLGKG…PAFDTLSPQL (274 aa)). Residues 824–832 (LGKGNFGSV) and lysine 851 each bind ATP. Phosphotyrosine is present on residues tyrosine 900 and tyrosine 935. Aspartate 945 functions as the Proton acceptor in the catalytic mechanism. Tyrosine 976 and tyrosine 977 each carry phosphotyrosine; by autocatalysis.

It belongs to the protein kinase superfamily. Tyr protein kinase family. JAK subfamily. As to quaternary structure, interacts with STAM2 and MYO18A. Interacts with SHB. Interacts with CD69. Autophosphorylated, leading to regulate its activity. IL2 promotes phosphorylation on tyrosine residues, including autophosphorylation on Tyr-781. Dephosphorylation of Tyr-976 and Tyr-977 by PTPN2 negatively regulates cytokine-mediated signaling. As to expression, in contrast with the ubiquitous expression of the other JAKs, JAK3 is predominantly expressed in hematopoietic tissues.

It localises to the endomembrane system. Its subcellular location is the cytoplasm. The enzyme catalyses L-tyrosyl-[protein] + ATP = O-phospho-L-tyrosyl-[protein] + ADP + H(+). Its function is as follows. Non-receptor tyrosine kinase involved in various processes such as cell growth, development, or differentiation. Mediates essential signaling events in both innate and adaptive immunity and plays a crucial role in hematopoiesis during T-cells development. In the cytoplasm, plays a pivotal role in signal transduction via its association with type I receptors sharing the common subunit gamma such as IL2R, IL4R, IL7R, IL9R, IL15R and IL21R. Following ligand binding to cell surface receptors, phosphorylates specific tyrosine residues on the cytoplasmic tails of the receptor, creating docking sites for STATs proteins. Subsequently, phosphorylates the STATs proteins once they are recruited to the receptor. Phosphorylated STATs then form homodimer or heterodimers and translocate to the nucleus to activate gene transcription. For example, upon IL2R activation by IL2, JAK1 and JAK3 molecules bind to IL2R beta (IL2RB) and gamma chain (IL2RG) subunits inducing the tyrosine phosphorylation of both receptor subunits on their cytoplasmic domain. Then, STAT5A and STAT5B are recruited, phosphorylated and activated by JAK1 and JAK3. Once activated, dimerized STAT5 translocates to the nucleus and promotes the transcription of specific target genes in a cytokine-specific fashion. This Rattus norvegicus (Rat) protein is Tyrosine-protein kinase JAK3.